A 747-amino-acid polypeptide reads, in one-letter code: MTSQSLRDQAATFGLTTEEYDLFVSQLGREPNALEAAIVGAMWSEHCGYKNSRPLFRAFPTTGPQVLQGPGENAGVVDIGDGWGVAFKMESHNHPSAVEPVQGAATGVGGILRDIFAMGARPFAVLDSLRFGNPDSPRTRFLVNGVVDGIAHYGNAIGVPTVGGEVTFHPSYQENPLVNVMALGLLRHEDLATGTMGEVGNQIVYVGSKTGRDGLGGAVFSSADLSAASQADRPAVQVGDPFMEKLLLEATLEAIQAGLVAGVQDMGAAGLVSSTCEMAYRASLGITMDLDKVPTREEGMVPMELCLSESQERMILVPVPGKEQALHDLLAKWELDVVTIGEVEAHDRYRLTWKGEVVCDLPVALLNEAPKYTREGVESADIRAARERDLSGVPLPGDLGAVLLELLSHPTIASKRPIFERYDHQVMTNTVVVPGAADAAVLRVKGSPMGVAATSDCNPRFVQLDPYAGAAAAVAEAARNLACVGATPLAITDNLNFGNPHRPEVYYQLQQAVQGIADACRALNTPVTGGNVSLYNQYTEGDHKVAIHPTPTIGMVGVLPDVTVRASLNLKAAGQTLLLLGHRAEKGWSDSIGASQYLETVHGLEAGQVPPVDLDLAQKVVDGTLALIRAGLTDTAHDCAEGGLAVALAEMAIAGGLGLNVSLDAPASVRADALLFGEAHSRVIVAVEDAAAAGAKLDELGLPYAVLGETVEAPKVTIAAPAQHVHLSVNLESLKTAWEEPLKGILG.

The active site involves H46. ATP is bound by residues Y49 and K88. E90 serves as a coordination point for Mg(2+). Residues 91 to 94 (SHNH) and R113 each bind substrate. H92 serves as the catalytic Proton acceptor. D114 is a binding site for Mg(2+). Q237 provides a ligand contact to substrate. D265 provides a ligand contact to Mg(2+). 309-311 (ESQ) is a binding site for substrate. ATP is bound by residues D493 and G530. Residue N531 coordinates Mg(2+). Residue S533 coordinates substrate.

Belongs to the FGAMS family. As to quaternary structure, monomer. Part of the FGAM synthase complex composed of 1 PurL, 1 PurQ and 2 PurS subunits.

Its subcellular location is the cytoplasm. The catalysed reaction is N(2)-formyl-N(1)-(5-phospho-beta-D-ribosyl)glycinamide + L-glutamine + ATP + H2O = 2-formamido-N(1)-(5-O-phospho-beta-D-ribosyl)acetamidine + L-glutamate + ADP + phosphate + H(+). Its pathway is purine metabolism; IMP biosynthesis via de novo pathway; 5-amino-1-(5-phospho-D-ribosyl)imidazole from N(2)-formyl-N(1)-(5-phospho-D-ribosyl)glycinamide: step 1/2. Its function is as follows. Part of the phosphoribosylformylglycinamidine synthase complex involved in the purines biosynthetic pathway. Catalyzes the ATP-dependent conversion of formylglycinamide ribonucleotide (FGAR) and glutamine to yield formylglycinamidine ribonucleotide (FGAM) and glutamate. The FGAM synthase complex is composed of three subunits. PurQ produces an ammonia molecule by converting glutamine to glutamate. PurL transfers the ammonia molecule to FGAR to form FGAM in an ATP-dependent manner. PurS interacts with PurQ and PurL and is thought to assist in the transfer of the ammonia molecule from PurQ to PurL. The protein is Phosphoribosylformylglycinamidine synthase subunit PurL of Deinococcus radiodurans (strain ATCC 13939 / DSM 20539 / JCM 16871 / CCUG 27074 / LMG 4051 / NBRC 15346 / NCIMB 9279 / VKM B-1422 / R1).